Reading from the N-terminus, the 603-residue chain is Serine palmitoyltransferase 2 (603 aa).

The chain crosses the membrane as a helical span at residues 90–107 (YYYVVATYLTYLVLIIIG). Lys-398 carries the post-translational modification N6-(pyridoxal phosphate)lysine.

This sequence belongs to the class-II pyridoxal-phosphate-dependent aminotransferase family. Lcb1 and lcb2 encode essential subunits of the enzyme and form a heterodimer. The cofactor is pyridoxal 5'-phosphate.

The protein resides in the cytoplasm. Its subcellular location is the endoplasmic reticulum. The protein localises to the membrane. It carries out the reaction L-serine + hexadecanoyl-CoA + H(+) = 3-oxosphinganine + CO2 + CoA. Its pathway is lipid metabolism; sphingolipid metabolism. Its function is as follows. Catalytic subunit of serine palmitoyltransferase (SPT), which catalyzes the committed step in the synthesis of sphingolipids, the condensation of serine with palmitoyl CoA to form the long chain base 3-ketosphinganine. In Schizosaccharomyces pombe (strain 972 / ATCC 24843) (Fission yeast), this protein is Serine palmitoyltransferase 2 (lcb2).